We begin with the raw amino-acid sequence, 318 residues long: Methionyl-tRNA formyltransferase (318 aa).

112-115 (SILP) contacts (6S)-5,6,7,8-tetrahydrofolate.

The protein belongs to the Fmt family.

It carries out the reaction L-methionyl-tRNA(fMet) + (6R)-10-formyltetrahydrofolate = N-formyl-L-methionyl-tRNA(fMet) + (6S)-5,6,7,8-tetrahydrofolate + H(+). Attaches a formyl group to the free amino group of methionyl-tRNA(fMet). The formyl group appears to play a dual role in the initiator identity of N-formylmethionyl-tRNA by promoting its recognition by IF2 and preventing the misappropriation of this tRNA by the elongation apparatus. This is Methionyl-tRNA formyltransferase from Shewanella baltica (strain OS155 / ATCC BAA-1091).